Reading from the N-terminus, the 385-residue chain is Zinc finger protein B385R (385 aa).

The C2H2-type zinc-finger motif lies at 166–190; the sequence is LQCPNCGCIQELMGTIFDETHFYNH.

This sequence belongs to the asfivirus B385R family.

This Ornithodoros (relapsing fever ticks) protein is Zinc finger protein B385R.